A 137-amino-acid chain; its full sequence is Ribosome-binding factor A (137 aa).

This sequence belongs to the RbfA family. In terms of assembly, monomer. Binds 30S ribosomal subunits, but not 50S ribosomal subunits or 70S ribosomes.

The protein resides in the cytoplasm. One of several proteins that assist in the late maturation steps of the functional core of the 30S ribosomal subunit. Associates with free 30S ribosomal subunits (but not with 30S subunits that are part of 70S ribosomes or polysomes). Required for efficient processing of 16S rRNA. May interact with the 5'-terminal helix region of 16S rRNA. In Nitrobacter winogradskyi (strain ATCC 25391 / DSM 10237 / CIP 104748 / NCIMB 11846 / Nb-255), this protein is Ribosome-binding factor A.